The chain runs to 444 residues: 23S rRNA (uracil(1939)-C(5))-methyltransferase RlmD (444 aa).

The TRAM domain occupies 5-67 (RSRIDRTPFQ…RHFDEARTVE (63 aa)). The [4Fe-4S] cluster site is built by Cys-80, Cys-86, Cys-89, and Cys-168. Residues Gln-276, Phe-305, Asn-310, Glu-326, Asp-353, and Asp-374 each contribute to the S-adenosyl-L-methionine site. Cys-400 serves as the catalytic Nucleophile.

Belongs to the class I-like SAM-binding methyltransferase superfamily. RNA M5U methyltransferase family. RlmD subfamily.

The catalysed reaction is uridine(1939) in 23S rRNA + S-adenosyl-L-methionine = 5-methyluridine(1939) in 23S rRNA + S-adenosyl-L-homocysteine + H(+). Catalyzes the formation of 5-methyl-uridine at position 1939 (m5U1939) in 23S rRNA. The protein is 23S rRNA (uracil(1939)-C(5))-methyltransferase RlmD of Stenotrophomonas maltophilia (strain K279a).